The sequence spans 91 residues: Small ribosomal subunit protein uS19 (91 aa).

It belongs to the universal ribosomal protein uS19 family.

Protein S19 forms a complex with S13 that binds strongly to the 16S ribosomal RNA. The chain is Small ribosomal subunit protein uS19 from Marinomonas sp. (strain MWYL1).